The sequence spans 83 residues: Small ribosomal subunit protein eS21 (83 aa).

Belongs to the eukaryotic ribosomal protein eS21 family. In terms of assembly, component of the 40S small ribosomal subunit.

It is found in the cytoplasm. Its subcellular location is the cytosol. The protein localises to the rough endoplasmic reticulum. Its function is as follows. Component of the small ribosomal subunit. The ribosome is a large ribonucleoprotein complex responsible for the synthesis of proteins in the cell. The chain is Small ribosomal subunit protein eS21 (rps21) from Xenopus laevis (African clawed frog).